Reading from the N-terminus, the 2073-residue chain is Dedicator of cytokinesis protein 11 (2073 aa).

Position 12 is a phosphoserine (Ser12). Thr16 is subject to Phosphothreonine. Phosphoserine is present on residues Ser23 and Ser161. Residues 165–272 (GVIKQGWLHK…WLITLKKIIQ (108 aa)) form the PH domain. Residue Tyr248 is modified to Phosphotyrosine. Ser306, Ser440, and Ser445 each carry phosphoserine. A C2 DOCK-type domain is found at 640 to 818 (KNHLYVYPLQ…PLLKIKSHLE (179 aa)). A disordered region spans residues 1226–1267 (FQNGHGIKREDSRGSLIPEGATGFPDQGNTGENTRQSSTRSS). Phosphoserine occurs at positions 1237 and 1240. A DOCKER domain is found at 1609–2036 (KSYASTPELR…LSDIIHEQIL (428 aa)).

The protein belongs to the DOCK family. In terms of assembly, interacts with CDC42.

Functionally, guanine nucleotide-exchange factor (GEF) that activates CDC42 by exchanging bound GDP for free GTP. Required for marginal zone (MZ) B-cell development, is associated with early bone marrow B-cell development, MZ B-cell formation, MZ B-cell number and marginal metallophilic macrophages morphology. Facilitates filopodia formation through the activation of CDC42. The sequence is that of Dedicator of cytokinesis protein 11 from Homo sapiens (Human).